Consider the following 366-residue polypeptide: Arfaptin-1 (366 aa).

A disordered region spans residues 1 to 78; the sequence is MAEESPKNSA…SSAPPLPCVL (78 aa). Alanine 2 carries the N-acetylalanine modification. Serine 5 is modified (phosphoserine). Basic and acidic residues predominate over residues 22–35; sequence GDAHEHGYNRDLKH. Residues serine 36 and serine 39 each carry the phosphoserine modification. Over residues 44 to 53 the composition is skewed to polar residues; that stretch reads SETQITSHGF. A phosphoserine mark is found at serine 69, serine 79, and serine 125. Residues 146-346 form the AH domain; that stretch reads TVDLELEAQI…NQKQLEQTLK (201 aa). At threonine 354 the chain carries Phosphothreonine.

Forms homodimers or heterodimers with ARFIP2. Interacts with non-myristoylated GTP-bound ARF3, but not to GDP-bound ARF3. Interacts with ARF1. Binds with lower affinity to ARF5 and with very little affinity to ARF6. Interacts with ARL1. Interacts with ATG9A.

It localises to the golgi apparatus. Its subcellular location is the trans-Golgi network membrane. Its function is as follows. Plays a role in controlling biogenesis of secretory granules at the trans-Golgi network. Mechanistically, binds ARF-GTP at the neck of a growing secretory granule precursor and forms a protective scaffold. Once the granule precursor has been completely loaded, active PRKD1 phosphorylates ARFIP1 and releases it from ARFs. In turn, ARFs induce fission. Through this mechanism, ensures proper secretory granule formation at the Golgi of pancreatic beta cells. The protein is Arfaptin-1 of Rattus norvegicus (Rat).